The primary structure comprises 221 residues: MPSSQAHSAVDTPIENHFPGSLFMVVAPSGAGKSTLVNALLAQDPSIRLSVSATTRKPRPGEQHGREYNFMTVDEFKACRDRGEFLEWAEVHGNYYATSRVWIEEQMRAGTDVLLEIDWQGAQQVHRRFANAVEIFILPPSLTALEDRLKKRGQDEPNVIVRRLLAAGSEMAHAPEADYVIINEVFEAALAELRTVVQAARLRYMAQKARHAELFVELGIH.

Positions 20 to 198 constitute a Guanylate kinase-like domain; sequence GSLFMVVAPS…ALAELRTVVQ (179 aa). 27–34 provides a ligand contact to ATP; the sequence is APSGAGKS.

The protein belongs to the guanylate kinase family.

It localises to the cytoplasm. The enzyme catalyses GMP + ATP = GDP + ADP. Essential for recycling GMP and indirectly, cGMP. The polypeptide is Guanylate kinase (Ralstonia nicotianae (strain ATCC BAA-1114 / GMI1000) (Ralstonia solanacearum)).